A 118-amino-acid polypeptide reads, in one-letter code: Basic phospholipase A2 PA-12C (118 aa).

Intrachain disulfides connect cysteine 11–cysteine 71, cysteine 27–cysteine 117, cysteine 29–cysteine 45, cysteine 44–cysteine 98, cysteine 51–cysteine 91, cysteine 60–cysteine 84, and cysteine 78–cysteine 89. Residues tyrosine 28, glycine 30, and glycine 32 each coordinate Ca(2+). Histidine 48 is a catalytic residue. Aspartate 49 is a Ca(2+) binding site. The active site involves aspartate 92.

The protein belongs to the phospholipase A2 family. Group I subfamily. D49 sub-subfamily. It depends on Ca(2+) as a cofactor. As to expression, expressed by the venom gland.

It localises to the secreted. The enzyme catalyses a 1,2-diacyl-sn-glycero-3-phosphocholine + H2O = a 1-acyl-sn-glycero-3-phosphocholine + a fatty acid + H(+). Functionally, PLA2 catalyzes the calcium-dependent hydrolysis of the 2-acyl groups in 3-sn-phosphoglycerides. The polypeptide is Basic phospholipase A2 PA-12C (Pseudechis australis (Mulga snake)).